Consider the following 307-residue polypeptide: MPSEHPFSDGISTPNPKETMNDTAQITASYGRRYIVRTPDGTTYEASTRKKRVDFACGDRVRISPVNAEQVVIEDFLPRQSLLYRQDAWKTKLIAANVTQLLIVTAAVPSPSMRLLQRALLAAEAAGIEAVIVLNKADLPETALWREKLKFYETLGYPVIETRALENADLLRPVLQGHSNILLGQSGMGKSTLTNALLGSQTARTGDISAALDSGKHTTTHARLYDLNGETQLIDSPGLQEFGLHHLQAADLPRYFPDFRHLVGQCRFHNCTHRAEPGCAFKAAAETGAASPERLAFLQGITDELPG.

Residues 1-20 (MPSEHPFSDGISTPNPKETM) form a disordered region. Residues 10–20 (GISTPNPKETM) show a composition bias toward polar residues. The CP-type G domain maps to 85–242 (RQDAWKTKLI…LIDSPGLQEF (158 aa)). GTP-binding positions include 135-138 (NKAD) and 184-192 (GQSGMGKST). 4 residues coordinate Zn(2+): Cys266, Cys271, His273, and Cys279.

It belongs to the TRAFAC class YlqF/YawG GTPase family. RsgA subfamily. In terms of assembly, monomer. Associates with 30S ribosomal subunit, binds 16S rRNA. It depends on Zn(2+) as a cofactor.

The protein localises to the cytoplasm. In terms of biological role, one of several proteins that assist in the late maturation steps of the functional core of the 30S ribosomal subunit. Helps release RbfA from mature subunits. May play a role in the assembly of ribosomal proteins into the subunit. Circularly permuted GTPase that catalyzes slow GTP hydrolysis, GTPase activity is stimulated by the 30S ribosomal subunit. The protein is Small ribosomal subunit biogenesis GTPase RsgA of Neisseria meningitidis serogroup C / serotype 2a (strain ATCC 700532 / DSM 15464 / FAM18).